The chain runs to 139 residues: Small ribosomal subunit protein uS12 (139 aa).

The disordered stretch occupies residues 1 to 44; that stretch reads MPTINQLVRKPRQSKITKSKSPALNKGYNSFKKSLTDVKSPQKR. The span at 9–18 shows a compositional bias: basic residues; the sequence is RKPRQSKITK. Residues 19–39 are compositionally biased toward polar residues; sequence SKSPALNKGYNSFKKSLTDVK. Asp102 carries the post-translational modification 3-methylthioaspartic acid.

This sequence belongs to the universal ribosomal protein uS12 family. Part of the 30S ribosomal subunit. Contacts proteins S8 and S17. May interact with IF1 in the 30S initiation complex.

Its function is as follows. With S4 and S5 plays an important role in translational accuracy. Interacts with and stabilizes bases of the 16S rRNA that are involved in tRNA selection in the A site and with the mRNA backbone. Located at the interface of the 30S and 50S subunits, it traverses the body of the 30S subunit contacting proteins on the other side and probably holding the rRNA structure together. The combined cluster of proteins S8, S12 and S17 appears to hold together the shoulder and platform of the 30S subunit. This chain is Small ribosomal subunit protein uS12, found in Lysinibacillus sphaericus (strain C3-41).